The following is a 204-amino-acid chain: INSIG protein homolog (204 aa).

Transmembrane regions (helical) follow at residues 5-27 (ISEA…HSHV), 47-64 (FWFP…AELR), 76-97 (ARQA…ALVH), 101-118 (VVPV…TWCV), and 124-145 (GAAC…LVQL). Histidine 26 serves as a coordination point for a 1,2-diacyl-sn-glycerol. Position 150 (tyrosine 150) interacts with a 1,2-diacyl-sn-glycerol. A helical transmembrane segment spans residues 162–179 (PFLAPLYFAFGVVAALLG).

This sequence belongs to the INSIG family. As to quaternary structure, homotrimer.

Its subcellular location is the membrane. Functionally, diacylglycerol-binding protein. The protein is INSIG protein homolog of Mycolicibacterium vanbaalenii (strain DSM 7251 / JCM 13017 / BCRC 16820 / KCTC 9966 / NRRL B-24157 / PYR-1) (Mycobacterium vanbaalenii).